The chain runs to 427 residues: Enolase (427 aa).

Glutamine 163 serves as a coordination point for (2R)-2-phosphoglycerate. The Proton donor role is filled by glutamate 205. Residues aspartate 242, glutamate 285, and aspartate 312 each contribute to the Mg(2+) site. The (2R)-2-phosphoglycerate site is built by lysine 337, arginine 366, serine 367, and lysine 388. Catalysis depends on lysine 337, which acts as the Proton acceptor.

This sequence belongs to the enolase family. Requires Mg(2+) as cofactor.

The protein localises to the cytoplasm. Its subcellular location is the secreted. It is found in the cell surface. The enzyme catalyses (2R)-2-phosphoglycerate = phosphoenolpyruvate + H2O. It participates in carbohydrate degradation; glycolysis; pyruvate from D-glyceraldehyde 3-phosphate: step 4/5. In terms of biological role, catalyzes the reversible conversion of 2-phosphoglycerate (2-PG) into phosphoenolpyruvate (PEP). It is essential for the degradation of carbohydrates via glycolysis. In Dechloromonas aromatica (strain RCB), this protein is Enolase.